The primary structure comprises 214 residues: Killer cell lectin-like receptor subfamily B member 1 (214 aa).

Residues 1–42 lie on the Cytoplasmic side of the membrane; sequence MDAPVLYAELHLANTQGLRCTSPPSPRQDACWGSGWHRVALK. The helical; Signal-anchor for type II membrane protein transmembrane segment at 43-63 threads the bilayer; that stretch reads LGCVGLILLLMGLSVLVGFLV. At 64-214 the chain is on the extracellular side; the sequence is QKPPIEKCSV…WICQKTLKRV (151 aa). The C-type lectin domain maps to 98 to 208; sequence HWNKCLFISQ…CSSDNHWICQ (111 aa). 2 cysteine pairs are disulfide-bonded: Cys-119–Cys-207 and Cys-186–Cys-199.

Its subcellular location is the membrane. The chain is Killer cell lectin-like receptor subfamily B member 1 (Klrb1) from Rattus norvegicus (Rat).